A 373-amino-acid polypeptide reads, in one-letter code: 3 beta-hydroxysteroid dehydrogenase/Delta 5--&gt;4-isomerase (373 aa).

Residue Y155 is the Proton acceptor of the active site. Residue K159 participates in NAD(+) binding. The helical transmembrane segment at 288–308 (IFLKYWLAFLLEIVSFLLSPI) threads the bilayer.

Belongs to the 3-beta-HSD family.

The protein localises to the endoplasmic reticulum membrane. The protein resides in the mitochondrion membrane. It catalyses the reaction a 3beta-hydroxy-Delta(5)-steroid + NAD(+) = a 3-oxo-Delta(5)-steroid + NADH + H(+). The catalysed reaction is a 3-oxo-Delta(5)-steroid = a 3-oxo-Delta(4)-steroid. It participates in lipid metabolism; steroid biosynthesis. In terms of biological role, 3-beta-HSD is a bifunctional enzyme, that catalyzes the oxidative conversion of Delta(5)-ene-3-beta-hydroxy steroid, and the oxidative conversion of ketosteroids. The 3-beta-HSD enzymatic system plays a crucial role in the biosynthesis of all classes of hormonal steroids. This chain is 3 beta-hydroxysteroid dehydrogenase/Delta 5--&gt;4-isomerase (HSD3B), found in Equus caballus (Horse).